Consider the following 166-residue polypeptide: Small ribosomal subunit protein uS4 (166 aa).

Residues 102–164 form the S4 RNA-binding domain; that stretch reads RRLQTIVWRK…HPSCLEVEKE (63 aa).

This sequence belongs to the universal ribosomal protein uS4 family. Part of the 30S ribosomal subunit. Contacts protein S5. The interaction surface between S4 and S5 is involved in control of translational fidelity.

Functionally, one of the primary rRNA binding proteins, it binds directly to 16S rRNA where it nucleates assembly of the body of the 30S subunit. In terms of biological role, with S5 and S12 plays an important role in translational accuracy. In Korarchaeum cryptofilum (strain OPF8), this protein is Small ribosomal subunit protein uS4.